We begin with the raw amino-acid sequence, 451 residues long: uncharacterized protein (451 aa).

The 59-residue stretch at 2–60 folds into the TRAM domain; sequence VVKVKQKIPLKIKRMGINGEGIGFYQKTLVFVPGALKGEDIFCQITAVKRNFAEAKLLT. [4Fe-4S] cluster-binding residues include Cys-73, Cys-79, Cys-82, and Cys-162. S-adenosyl-L-methionine is bound by residues Gln-283, Tyr-312, Asp-333, and Asp-381. The active-site Nucleophile is Cys-408.

The protein belongs to the class I-like SAM-binding methyltransferase superfamily. RNA M5U methyltransferase family.

This is an uncharacterized protein from Streptococcus pyogenes serotype M1.